We begin with the raw amino-acid sequence, 140 residues long: uncharacterized protein (140 aa).

The tract at residues 121 to 140 (EEVKNGELIDPNVTTEDEKL) is disordered.

This is an uncharacterized protein from Schizosaccharomyces pombe (strain 972 / ATCC 24843) (Fission yeast).